The chain runs to 597 residues: tRNA uridine 5-carboxymethylaminomethyl modification enzyme MnmG (597 aa).

10–15 (GGGHAG) contributes to the FAD binding site. 267-281 (GPRYCPSIEDKVVRF) lines the NAD(+) pocket.

This sequence belongs to the MnmG family. Homodimer. Heterotetramer of two MnmE and two MnmG subunits. The cofactor is FAD.

It localises to the cytoplasm. Functionally, NAD-binding protein involved in the addition of a carboxymethylaminomethyl (cmnm) group at the wobble position (U34) of certain tRNAs, forming tRNA-cmnm(5)s(2)U34. The polypeptide is tRNA uridine 5-carboxymethylaminomethyl modification enzyme MnmG (Thermus thermophilus (strain ATCC BAA-163 / DSM 7039 / HB27)).